The primary structure comprises 186 residues: Spermidine N(1)-acetyltransferase (186 aa).

One can recognise an N-acetyltransferase domain in the interval 7-167 (VKLRPLERED…NAIRMCIFQH (161 aa)). Spermine contacts are provided by residues Met30, Glu35, Glu43, and 51-54 (HIHD). Glu35 is a binding site for Mg(2+). Spermidine is bound by residues Glu35 and Glu43. Glu76 is a Mg(2+) binding site. 85–87 (EFQ) is a binding site for spermine. Residues 88–90 (III), 95–101 (QGKGLAT), and 128–137 (NEKAIHIYRK) each bind acetyl-CoA. The active-site Proton donor is the Tyr135.

This sequence belongs to the acetyltransferase family. In terms of assembly, homododecamer.

The protein localises to the cytoplasm. The catalysed reaction is an alkane-alpha,omega-diamine + acetyl-CoA = an N-acetylalkane-alpha,omega-diamine + CoA + H(+). The enzyme catalyses spermidine + acetyl-CoA = N(1)-acetylspermidine + CoA + H(+). It carries out the reaction spermidine + acetyl-CoA = N(8)-acetylspermidine + CoA + H(+). It catalyses the reaction spermine + acetyl-CoA = N(1)-acetylspermine + CoA + H(+). It functions in the pathway amine and polyamine degradation; spermidine degradation. It participates in amine and polyamine degradation; spermine degradation. Functionally, involved in the protection against polyamine toxicity by regulating their concentration. Catalyzes the transfer of an acetyl group from acetyl coenzyme A (AcCoA) to the primary amino groups of spermidine to yield N(1)- and N(8)-acetylspermidine. It can also use spermine. This chain is Spermidine N(1)-acetyltransferase (speG), found in Escherichia coli O157:H7.